The sequence spans 348 residues: Mamu class I histocompatibility antigen, alpha chain F (348 aa).

The signal sequence occupies residues 1 to 21 (MAPRTLLLVLSGALALTETWA). Residues 22–113 (GSHSLRYFST…LLLRYNQSEA (92 aa)) form an alpha-1 region. Over 22-307 (GSHSLRYFST…ESSSQPTIPI (286 aa)) the chain is Extracellular. N-linked (GlcNAc...) asparagine glycosylation is present at asparagine 109. Residues 114–205 (GSHTLQGMNG…ENGKETLQRA (92 aa)) are alpha-2. 2 disulfides stabilise this stretch: cysteine 124–cysteine 187 and cysteine 226–cysteine 282. Residues 206–297 (DPPKAHVAHH…GLPQPLTLRW (92 aa)) form an alpha-3 region. One can recognise an Ig-like C1-type domain in the interval 208-296 (PKAHVAHHPI…EGLPQPLTLR (89 aa)). Residues 298-307 (ESSSQPTIPI) form a connecting peptide region. The helical transmembrane segment at 308–331 (VGIVAGLAVLAVVVTGAVVAAVMW) threads the bilayer. Residues 332–348 (RRKSSDRNRGSYSQPTM) are Cytoplasmic-facing.

It belongs to the MHC class I family. As to quaternary structure, heterodimer of an alpha chain and a beta chain (beta-2-microglobulin).

It localises to the membrane. In terms of biological role, involved in the presentation of foreign antigens to the immune system. The sequence is that of Mamu class I histocompatibility antigen, alpha chain F (Mamu-F) from Macaca mulatta (Rhesus macaque).